The chain runs to 159 residues: NAD(P)H-quinone oxidoreductase subunit J, chloroplastic (159 aa).

The protein belongs to the complex I 30 kDa subunit family. As to quaternary structure, NDH is composed of at least 16 different subunits, 5 of which are encoded in the nucleus.

It is found in the plastid. The protein localises to the chloroplast thylakoid membrane. The enzyme catalyses a plastoquinone + NADH + (n+1) H(+)(in) = a plastoquinol + NAD(+) + n H(+)(out). The catalysed reaction is a plastoquinone + NADPH + (n+1) H(+)(in) = a plastoquinol + NADP(+) + n H(+)(out). In terms of biological role, NDH shuttles electrons from NAD(P)H:plastoquinone, via FMN and iron-sulfur (Fe-S) centers, to quinones in the photosynthetic chain and possibly in a chloroplast respiratory chain. The immediate electron acceptor for the enzyme in this species is believed to be plastoquinone. Couples the redox reaction to proton translocation, and thus conserves the redox energy in a proton gradient. The sequence is that of NAD(P)H-quinone oxidoreductase subunit J, chloroplastic from Agrostis stolonifera (Creeping bentgrass).